The chain runs to 396 residues: S-adenosylmethionine synthase (396 aa).

Glu11 serves as a coordination point for Mg(2+). ATP is bound at residue His17. Residue Glu45 participates in K(+) binding. L-methionine contacts are provided by Glu58 and Gln101. ATP is bound by residues 169 to 171, 237 to 240, Asp248, 254 to 255, Ala271, Lys275, and Lys279; these read DGK, SGRF, and RK. Asp248 lines the L-methionine pocket. Lys279 contributes to the L-methionine binding site.

Belongs to the AdoMet synthase family. As to quaternary structure, homotetramer. Mn(2+) is required as a cofactor. Mg(2+) serves as cofactor. It depends on Co(2+) as a cofactor. The cofactor is K(+).

The protein localises to the cytoplasm. The catalysed reaction is L-methionine + ATP + H2O = S-adenosyl-L-methionine + phosphate + diphosphate. Its pathway is amino-acid biosynthesis; S-adenosyl-L-methionine biosynthesis; S-adenosyl-L-methionine from L-methionine: step 1/1. Catalyzes the formation of S-adenosylmethionine from methionine and ATP. The reaction comprises two steps that are both catalyzed by the same enzyme: formation of S-adenosylmethionine (AdoMet) and triphosphate, and subsequent hydrolysis of the triphosphate. In Medicago sativa subsp. falcata (Sickle medic), this protein is S-adenosylmethionine synthase (SAMS).